Here is a 57-residue protein sequence, read N- to C-terminus: Small ribosomal subunit protein bS21 (57 aa).

Residues 35 to 57 (RERYEKPSLRRKRKQEAARKRNR) are disordered.

The protein belongs to the bacterial ribosomal protein bS21 family.

This is Small ribosomal subunit protein bS21 from Thermosynechococcus vestitus (strain NIES-2133 / IAM M-273 / BP-1).